Reading from the N-terminus, the 243-residue chain is Pyridoxine 5'-phosphate synthase (243 aa).

N9 is a 3-amino-2-oxopropyl phosphate binding site. 1-deoxy-D-xylulose 5-phosphate is bound at residue 11–12 (DH). R20 lines the 3-amino-2-oxopropyl phosphate pocket. The Proton acceptor role is filled by H45. The 1-deoxy-D-xylulose 5-phosphate site is built by R47 and H52. E72 serves as the catalytic Proton acceptor. T102 serves as a coordination point for 1-deoxy-D-xylulose 5-phosphate. The active-site Proton donor is H193. Residues G194 and 215-216 (GH) each bind 3-amino-2-oxopropyl phosphate.

This sequence belongs to the PNP synthase family. Homooctamer; tetramer of dimers.

The protein resides in the cytoplasm. The catalysed reaction is 3-amino-2-oxopropyl phosphate + 1-deoxy-D-xylulose 5-phosphate = pyridoxine 5'-phosphate + phosphate + 2 H2O + H(+). It participates in cofactor biosynthesis; pyridoxine 5'-phosphate biosynthesis; pyridoxine 5'-phosphate from D-erythrose 4-phosphate: step 5/5. Its function is as follows. Catalyzes the complicated ring closure reaction between the two acyclic compounds 1-deoxy-D-xylulose-5-phosphate (DXP) and 3-amino-2-oxopropyl phosphate (1-amino-acetone-3-phosphate or AAP) to form pyridoxine 5'-phosphate (PNP) and inorganic phosphate. The chain is Pyridoxine 5'-phosphate synthase from Aliivibrio fischeri (strain ATCC 700601 / ES114) (Vibrio fischeri).